A 433-amino-acid chain; its full sequence is Serine--tRNA ligase (433 aa).

An L-serine-binding site is contributed by 235-237; the sequence is TSE. 266-268 serves as a coordination point for ATP; sequence RSE. Residue Glu-289 coordinates L-serine. 353–356 serves as a coordination point for ATP; it reads EISS. Ser-388 lines the L-serine pocket.

This sequence belongs to the class-II aminoacyl-tRNA synthetase family. Type-1 seryl-tRNA synthetase subfamily. Homodimer. The tRNA molecule binds across the dimer.

It is found in the cytoplasm. It catalyses the reaction tRNA(Ser) + L-serine + ATP = L-seryl-tRNA(Ser) + AMP + diphosphate + H(+). The enzyme catalyses tRNA(Sec) + L-serine + ATP = L-seryl-tRNA(Sec) + AMP + diphosphate + H(+). Its pathway is aminoacyl-tRNA biosynthesis; selenocysteinyl-tRNA(Sec) biosynthesis; L-seryl-tRNA(Sec) from L-serine and tRNA(Sec): step 1/1. Its function is as follows. Catalyzes the attachment of serine to tRNA(Ser). Is also able to aminoacylate tRNA(Sec) with serine, to form the misacylated tRNA L-seryl-tRNA(Sec), which will be further converted into selenocysteinyl-tRNA(Sec). In Burkholderia thailandensis (strain ATCC 700388 / DSM 13276 / CCUG 48851 / CIP 106301 / E264), this protein is Serine--tRNA ligase.